Consider the following 235-residue polypeptide: Small ribosomal subunit protein uS2c (235 aa).

It belongs to the universal ribosomal protein uS2 family.

The protein localises to the plastid. The protein resides in the chloroplast. This Anthoceros angustus (Hornwort) protein is Small ribosomal subunit protein uS2c (rps2).